We begin with the raw amino-acid sequence, 486 residues long: UDP-N-acetylmuramate--L-alanine ligase (486 aa).

123–129 (GTHGKTT) is an ATP binding site.

This sequence belongs to the MurCDEF family.

It is found in the cytoplasm. The enzyme catalyses UDP-N-acetyl-alpha-D-muramate + L-alanine + ATP = UDP-N-acetyl-alpha-D-muramoyl-L-alanine + ADP + phosphate + H(+). It participates in cell wall biogenesis; peptidoglycan biosynthesis. Its function is as follows. Cell wall formation. The polypeptide is UDP-N-acetylmuramate--L-alanine ligase (Pseudomonas savastanoi pv. phaseolicola (strain 1448A / Race 6) (Pseudomonas syringae pv. phaseolicola (strain 1448A / Race 6))).